Reading from the N-terminus, the 741-residue chain is Phosphoribosylformylglycinamidine synthase subunit PurL (741 aa).

Residue histidine 53 is part of the active site. Residues tyrosine 56 and lysine 95 each contribute to the ATP site. Glutamate 97 is a binding site for Mg(2+). Substrate-binding positions include 98-101 (SHNH) and arginine 120. The active-site Proton acceptor is the histidine 99. Aspartate 121 is a Mg(2+) binding site. Position 244 (glutamine 244) interacts with substrate. Position 274 (aspartate 274) interacts with Mg(2+). 318 to 320 (ESQ) is a substrate binding site. Aspartate 501 and glycine 538 together coordinate ATP. Asparagine 539 is a Mg(2+) binding site. Serine 541 is a substrate binding site.

Belongs to the FGAMS family. Monomer. Part of the FGAM synthase complex composed of 1 PurL, 1 PurQ and 2 PurS subunits.

The protein resides in the cytoplasm. It carries out the reaction N(2)-formyl-N(1)-(5-phospho-beta-D-ribosyl)glycinamide + L-glutamine + ATP + H2O = 2-formamido-N(1)-(5-O-phospho-beta-D-ribosyl)acetamidine + L-glutamate + ADP + phosphate + H(+). The protein operates within purine metabolism; IMP biosynthesis via de novo pathway; 5-amino-1-(5-phospho-D-ribosyl)imidazole from N(2)-formyl-N(1)-(5-phospho-D-ribosyl)glycinamide: step 1/2. Its function is as follows. Part of the phosphoribosylformylglycinamidine synthase complex involved in the purines biosynthetic pathway. Catalyzes the ATP-dependent conversion of formylglycinamide ribonucleotide (FGAR) and glutamine to yield formylglycinamidine ribonucleotide (FGAM) and glutamate. The FGAM synthase complex is composed of three subunits. PurQ produces an ammonia molecule by converting glutamine to glutamate. PurL transfers the ammonia molecule to FGAR to form FGAM in an ATP-dependent manner. PurS interacts with PurQ and PurL and is thought to assist in the transfer of the ammonia molecule from PurQ to PurL. The chain is Phosphoribosylformylglycinamidine synthase subunit PurL from Latilactobacillus sakei subsp. sakei (strain 23K) (Lactobacillus sakei subsp. sakei).